The following is a 424-amino-acid chain: Dihydroorotase-like protein (424 aa).

This sequence belongs to the metallo-dependent hydrolases superfamily. DHOase family. PyrC' subfamily. In terms of assembly, heterododecamer of 6 active PyrB subunits and 6 non-catalytic PyrC' subunits.

In terms of biological role, non-functional DHOase. The chain is Dihydroorotase-like protein from Pseudomonas putida (Arthrobacter siderocapsulatus).